Consider the following 215-residue polypeptide: Ribosomal RNA small subunit methyltransferase G (215 aa).

S-adenosyl-L-methionine contacts are provided by residues G77, F82, 130-131 (IE), and R146.

Belongs to the methyltransferase superfamily. RNA methyltransferase RsmG family.

Its subcellular location is the cytoplasm. The catalysed reaction is guanosine(527) in 16S rRNA + S-adenosyl-L-methionine = N(7)-methylguanosine(527) in 16S rRNA + S-adenosyl-L-homocysteine. Specifically methylates the N7 position of guanine in position 527 of 16S rRNA. The chain is Ribosomal RNA small subunit methyltransferase G from Bartonella quintana (strain Toulouse) (Rochalimaea quintana).